Reading from the N-terminus, the 227-residue chain is 2,3-bisphosphoglycerate-dependent phosphoglycerate mutase (227 aa).

Residues 8–15 (RHGKSVWN), 21–22 (TG), Arg58, 110–113 (ERMY), Lys121, 137–138 (RR), and 181–182 (GN) each bind substrate. The Tele-phosphohistidine intermediate role is filled by His9. Catalysis depends on Glu110, which acts as the Proton donor/acceptor.

Belongs to the phosphoglycerate mutase family. BPG-dependent PGAM subfamily.

It carries out the reaction (2R)-2-phosphoglycerate = (2R)-3-phosphoglycerate. It functions in the pathway carbohydrate degradation; glycolysis; pyruvate from D-glyceraldehyde 3-phosphate: step 3/5. In terms of biological role, catalyzes the interconversion of 2-phosphoglycerate and 3-phosphoglycerate. The sequence is that of 2,3-bisphosphoglycerate-dependent phosphoglycerate mutase from Chlamydia felis (strain Fe/C-56) (Chlamydophila felis).